The following is a 409-amino-acid chain: Peptidase T (409 aa).

His78 is a binding site for Zn(2+). The active site involves Asp80. Asp140 is a Zn(2+) binding site. Glu173 serves as the catalytic Proton acceptor. 3 residues coordinate Zn(2+): Glu174, Asp196, and His379.

This sequence belongs to the peptidase M20B family. The cofactor is Zn(2+).

It is found in the cytoplasm. It carries out the reaction Release of the N-terminal residue from a tripeptide.. Cleaves the N-terminal amino acid of tripeptides. The polypeptide is Peptidase T (Salmonella dublin (strain CT_02021853)).